A 173-amino-acid polypeptide reads, in one-letter code: Crossover junction endodeoxyribonuclease RuvC (173 aa).

Residues aspartate 8, glutamate 67, and aspartate 139 contribute to the active site. Mg(2+)-binding residues include aspartate 8, glutamate 67, and aspartate 139.

This sequence belongs to the RuvC family. In terms of assembly, homodimer which binds Holliday junction (HJ) DNA. The HJ becomes 2-fold symmetrical on binding to RuvC with unstacked arms; it has a different conformation from HJ DNA in complex with RuvA. In the full resolvosome a probable DNA-RuvA(4)-RuvB(12)-RuvC(2) complex forms which resolves the HJ. Mg(2+) is required as a cofactor.

The protein resides in the cytoplasm. It carries out the reaction Endonucleolytic cleavage at a junction such as a reciprocal single-stranded crossover between two homologous DNA duplexes (Holliday junction).. In terms of biological role, the RuvA-RuvB-RuvC complex processes Holliday junction (HJ) DNA during genetic recombination and DNA repair. Endonuclease that resolves HJ intermediates. Cleaves cruciform DNA by making single-stranded nicks across the HJ at symmetrical positions within the homologous arms, yielding a 5'-phosphate and a 3'-hydroxyl group; requires a central core of homology in the junction. The consensus cleavage sequence is 5'-(A/T)TT(C/G)-3'. Cleavage occurs on the 3'-side of the TT dinucleotide at the point of strand exchange. HJ branch migration catalyzed by RuvA-RuvB allows RuvC to scan DNA until it finds its consensus sequence, where it cleaves and resolves the cruciform DNA. This Shewanella woodyi (strain ATCC 51908 / MS32) protein is Crossover junction endodeoxyribonuclease RuvC.